The primary structure comprises 422 residues: Histone-binding protein MSI1 (422 aa).

WD repeat units lie at residues 127-158, 198-238, 249-289, 294-334, 338-379, and 382-421; these read FPNG…YIFD, ADIN…HENP, SDGT…EKLQ, KHDG…KSPI, EHGT…TIFT, and GHML…LVGH.

This sequence belongs to the WD repeat RBAP46/RBAP48/MSI1 family. As to quaternary structure, component of chromatin assembly factor 1 (CAF-1), composed of MSI1/p50, CAC2/p60 and CAC1/p90. Interacts with protein kinase NPR1. Interacts with RTT106.

It is found in the cytoplasm. Its subcellular location is the nucleus. Acts as a component of the histone chaperone complex chromatin assembly factor 1 (CAF-1), which assembles histone octamers onto DNA during replication and repair. CAF-1 performs the first step of the nucleosome assembly process, bringing newly synthesized histones H3 and H4 to replicating DNA; histones H2A/H2B can bind to this chromatin precursor subsequent to DNA replication to complete the histone octamer. Plays a role in the maintenance of heterochromatin. Independently, MSI1 is involved in regulation of the RAS/cAMP pathway via sequestration of NPR1. The protein is Histone-binding protein MSI1 (MSI1) of Saccharomyces cerevisiae (strain ATCC 204508 / S288c) (Baker's yeast).